The chain runs to 84 residues: Cytochrome b559 subunit alpha (84 aa).

Residues 24–38 (IIHAVTLPAIFIAGF) traverse the membrane as a helical segment. H26 contributes to the heme binding site.

This sequence belongs to the PsbE/PsbF family. In terms of assembly, heterodimer of an alpha subunit and a beta subunit. PSII is composed of 1 copy each of membrane proteins PsbA, PsbB, PsbC, PsbD, PsbE, PsbF, PsbH, PsbI, PsbJ, PsbK, PsbL, PsbM, PsbT, PsbX, PsbY, Psb30/Ycf12, peripheral proteins PsbO, CyanoQ (PsbQ), PsbU, PsbV and a large number of cofactors. It forms dimeric complexes. Heme b serves as cofactor.

It is found in the cellular thylakoid membrane. In terms of biological role, this b-type cytochrome is tightly associated with the reaction center of photosystem II (PSII). PSII is a light-driven water:plastoquinone oxidoreductase that uses light energy to abstract electrons from H(2)O, generating O(2) and a proton gradient subsequently used for ATP formation. It consists of a core antenna complex that captures photons, and an electron transfer chain that converts photonic excitation into a charge separation. The polypeptide is Cytochrome b559 subunit alpha (Prochlorococcus marinus (strain MIT 9301)).